The following is a 412-amino-acid chain: Divalent metal cation transporter MntH (412 aa).

10 consecutive transmembrane segments (helical) span residues 19-39 (LSLM…GNFA), 46-66 (AAYG…AMLI), 98-118 (WVQA…GAAI), 122-142 (LLLG…TFLI), 155-175 (MVIG…LVFS), 196-216 (AVLL…IYLH), 241-261 (IAMT…AAAF), 286-306 (AAAV…TVVG), 348-368 (VLVL…VPLL), and 392-412 (LIVV…MSGI).

The protein belongs to the NRAMP family.

Its subcellular location is the cell inner membrane. H(+)-stimulated, divalent metal cation uptake system. The polypeptide is Divalent metal cation transporter MntH (Pectobacterium carotovorum subsp. carotovorum (strain PC1)).